A 217-amino-acid polypeptide reads, in one-letter code: GTP cyclohydrolase 1 (217 aa).

Residues cysteine 108, histidine 111, and cysteine 179 each contribute to the Zn(2+) site.

The protein belongs to the GTP cyclohydrolase I family. In terms of assembly, toroid-shaped homodecamer, composed of two pentamers of five dimers.

It catalyses the reaction GTP + H2O = 7,8-dihydroneopterin 3'-triphosphate + formate + H(+). It participates in cofactor biosynthesis; 7,8-dihydroneopterin triphosphate biosynthesis; 7,8-dihydroneopterin triphosphate from GTP: step 1/1. In Shewanella denitrificans (strain OS217 / ATCC BAA-1090 / DSM 15013), this protein is GTP cyclohydrolase 1.